A 245-amino-acid polypeptide reads, in one-letter code: 8-amino-3,8-dideoxy-manno-octulosonate cytidylyltransferase (245 aa).

It belongs to the KdsB family.

The protein localises to the cytoplasm. It carries out the reaction 8-amino-3,8-dideoxy-alpha-D-manno-octulosonate + CTP = CMP-8-amino-3,8-dideoxy-alpha-D-manno-oct-2-ulosonate + diphosphate. Its pathway is bacterial outer membrane biogenesis; lipopolysaccharide biosynthesis. Functionally, activates KDO8N (a required 8-carbon sugar) for incorporation into bacterial lipopolysaccharide in the Shewanella genus. The chain is 8-amino-3,8-dideoxy-manno-octulosonate cytidylyltransferase from Shewanella halifaxensis (strain HAW-EB4).